The sequence spans 325 residues: Elongation factor P--(R)-beta-lysine ligase (325 aa).

76-78 contacts substrate; the sequence is SPE. ATP-binding positions include 100 to 102 and Asn109; that span reads RNE. Tyr118 is a substrate binding site. 244–245 lines the ATP pocket; it reads EL. Substrate is bound at residue Glu251. Residue Gly300 participates in ATP binding.

Belongs to the class-II aminoacyl-tRNA synthetase family. EpmA subfamily. As to quaternary structure, homodimer.

It catalyses the reaction D-beta-lysine + L-lysyl-[protein] + ATP = N(6)-((3R)-3,6-diaminohexanoyl)-L-lysyl-[protein] + AMP + diphosphate + H(+). With EpmB is involved in the beta-lysylation step of the post-translational modification of translation elongation factor P (EF-P) on 'Lys-34'. Catalyzes the ATP-dependent activation of (R)-beta-lysine produced by EpmB, forming a lysyl-adenylate, from which the beta-lysyl moiety is then transferred to the epsilon-amino group of EF-P 'Lys-34'. This Salmonella dublin (strain CT_02021853) protein is Elongation factor P--(R)-beta-lysine ligase.